The chain runs to 266 residues: Imidazole glycerol phosphate synthase subunit HisF (266 aa).

Active-site residues include D11 and D130.

This sequence belongs to the HisA/HisF family. In terms of assembly, heterodimer of HisH and HisF.

Its subcellular location is the cytoplasm. The enzyme catalyses 5-[(5-phospho-1-deoxy-D-ribulos-1-ylimino)methylamino]-1-(5-phospho-beta-D-ribosyl)imidazole-4-carboxamide + L-glutamine = D-erythro-1-(imidazol-4-yl)glycerol 3-phosphate + 5-amino-1-(5-phospho-beta-D-ribosyl)imidazole-4-carboxamide + L-glutamate + H(+). The protein operates within amino-acid biosynthesis; L-histidine biosynthesis; L-histidine from 5-phospho-alpha-D-ribose 1-diphosphate: step 5/9. Its function is as follows. IGPS catalyzes the conversion of PRFAR and glutamine to IGP, AICAR and glutamate. The HisF subunit catalyzes the cyclization activity that produces IGP and AICAR from PRFAR using the ammonia provided by the HisH subunit. In Albidiferax ferrireducens (strain ATCC BAA-621 / DSM 15236 / T118) (Rhodoferax ferrireducens), this protein is Imidazole glycerol phosphate synthase subunit HisF.